Consider the following 293-residue polypeptide: tRNA-cytidine(32) 2-sulfurtransferase (293 aa).

The PP-loop motif signature appears at 62–67 (SGGKDS). [4Fe-4S] cluster contacts are provided by C137, C140, and C228.

This sequence belongs to the TtcA family. In terms of assembly, homodimer. The cofactor is Mg(2+). Requires [4Fe-4S] cluster as cofactor.

It is found in the cytoplasm. It carries out the reaction cytidine(32) in tRNA + S-sulfanyl-L-cysteinyl-[cysteine desulfurase] + AH2 + ATP = 2-thiocytidine(32) in tRNA + L-cysteinyl-[cysteine desulfurase] + A + AMP + diphosphate + H(+). Its pathway is tRNA modification. Its function is as follows. Catalyzes the ATP-dependent 2-thiolation of cytidine in position 32 of tRNA, to form 2-thiocytidine (s(2)C32). The sulfur atoms are provided by the cysteine/cysteine desulfurase (IscS) system. The protein is tRNA-cytidine(32) 2-sulfurtransferase of Brucella abortus (strain S19).